The following is a 1486-amino-acid chain: Chromosome partition protein MukB (1486 aa).

An ATP-binding site is contributed by 34-41 (GGNGAGKS). Coiled coils occupy residues 326–418 (LEAD…QYNQ), 444–480 (LETFQAKELEATEKMLSLEQKMSMAQTAHSQFEQAYQ), and 509–603 (RHLA…RAPV). A flexible hinge region spans residues 666–783 (PGGSEDQRLN…EVPLFGRAAR (118 aa)). Coiled-coil stretches lie at residues 835–923 (EAEI…AKLE), 977–1115 (EMLS…TAKA), and 1209–1266 (VEAI…QNVS).

This sequence belongs to the SMC family. MukB subfamily. In terms of assembly, homodimerization via its hinge domain. Binds to DNA via its C-terminal region. Interacts, and probably forms a ternary complex, with MukE and MukF via its C-terminal region. The complex formation is stimulated by calcium or magnesium. Interacts with tubulin-related protein FtsZ.

Its subcellular location is the cytoplasm. It is found in the nucleoid. Functionally, plays a central role in chromosome condensation, segregation and cell cycle progression. Functions as a homodimer, which is essential for chromosome partition. Involved in negative DNA supercoiling in vivo, and by this means organize and compact chromosomes. May achieve or facilitate chromosome segregation by condensation DNA from both sides of a centrally located replisome during cell division. The sequence is that of Chromosome partition protein MukB from Escherichia coli O81 (strain ED1a).